Reading from the N-terminus, the 284-residue chain is Bifunctional protein FolD (284 aa).

NADP(+) contacts are provided by residues 166–168 and Ile-232; that span reads GAS.

This sequence belongs to the tetrahydrofolate dehydrogenase/cyclohydrolase family. As to quaternary structure, homodimer.

The enzyme catalyses (6R)-5,10-methylene-5,6,7,8-tetrahydrofolate + NADP(+) = (6R)-5,10-methenyltetrahydrofolate + NADPH. It catalyses the reaction (6R)-5,10-methenyltetrahydrofolate + H2O = (6R)-10-formyltetrahydrofolate + H(+). It functions in the pathway one-carbon metabolism; tetrahydrofolate interconversion. Functionally, catalyzes the oxidation of 5,10-methylenetetrahydrofolate to 5,10-methenyltetrahydrofolate and then the hydrolysis of 5,10-methenyltetrahydrofolate to 10-formyltetrahydrofolate. The protein is Bifunctional protein FolD of Shewanella sediminis (strain HAW-EB3).